We begin with the raw amino-acid sequence, 285 residues long: ATP synthase gamma chain (285 aa).

It belongs to the ATPase gamma chain family. In terms of assembly, F-type ATPases have 2 components, CF(1) - the catalytic core - and CF(0) - the membrane proton channel. CF(1) has five subunits: alpha(3), beta(3), gamma(1), delta(1), epsilon(1). CF(0) has three main subunits: a, b and c.

The protein resides in the cell membrane. In terms of biological role, produces ATP from ADP in the presence of a proton gradient across the membrane. The gamma chain is believed to be important in regulating ATPase activity and the flow of protons through the CF(0) complex. In Exiguobacterium sp. (strain ATCC BAA-1283 / AT1b), this protein is ATP synthase gamma chain.